A 432-amino-acid chain; its full sequence is Gamma-glutamyl phosphate reductase (432 aa).

Belongs to the gamma-glutamyl phosphate reductase family.

It localises to the cytoplasm. It catalyses the reaction L-glutamate 5-semialdehyde + phosphate + NADP(+) = L-glutamyl 5-phosphate + NADPH + H(+). It functions in the pathway amino-acid biosynthesis; L-proline biosynthesis; L-glutamate 5-semialdehyde from L-glutamate: step 2/2. Its function is as follows. Catalyzes the NADPH-dependent reduction of L-glutamate 5-phosphate into L-glutamate 5-semialdehyde and phosphate. The product spontaneously undergoes cyclization to form 1-pyrroline-5-carboxylate. This Methylorubrum populi (strain ATCC BAA-705 / NCIMB 13946 / BJ001) (Methylobacterium populi) protein is Gamma-glutamyl phosphate reductase.